The primary structure comprises 167 residues: Peptide deformylase (167 aa).

Residues Cys-90 and His-132 each contribute to the Fe cation site. The active site involves Glu-133. His-136 contacts Fe cation.

The protein belongs to the polypeptide deformylase family. Fe(2+) serves as cofactor.

It catalyses the reaction N-terminal N-formyl-L-methionyl-[peptide] + H2O = N-terminal L-methionyl-[peptide] + formate. In terms of biological role, removes the formyl group from the N-terminal Met of newly synthesized proteins. Requires at least a dipeptide for an efficient rate of reaction. N-terminal L-methionine is a prerequisite for activity but the enzyme has broad specificity at other positions. This Dehalococcoides mccartyi (strain ATCC BAA-2100 / JCM 16839 / KCTC 5957 / BAV1) protein is Peptide deformylase.